The primary structure comprises 738 residues: MPLSRSLSVSSLPGLEDWEDEFDPENAVLFEVAWEVANKVGGIYTVLQTKAKVTGDEWGDNYYLVGPYTEQGVRTQVELLEPPTPELKRTLDSMNSKGCKVYFGRWLIEGGPLVVLLDVGASAWALERWKGELWDTCNIGVPWYDREANDAVLFGFLTTWFLGEFLAQNEEKPYVVAHFHEWLAGVGLCLCRARRLPVATIFTTHATLLGRYLCAGAVDFYNNLENFNVDKEAGERQIYHRYCMERAAAHCAHVFTTVSQITAIEAQHLLKRKPDIVTPNGLNVKKFSAMHEFQNLHAQSKARIQEFVRGHFYGHLDFNLDKTLYFFIAGRYEFSNKGADVFLEALARLNYLLRVNGSEQTVVAFFIMPARTNNFNVETLKGQAVRKQLWDTANTVKEKFGRKLYESLLVGSLPDMNKMLDKEDFTMMKRAIFATQRQSFPPVCTHNMLDDSSDPILTTIRRIGLFNSSADRVKVIFHPEFLSSTSPLLPVDYEEFVRGCHLGVFPSYYEPWGYTPAECTVMGIPSISTNLSGFGCFMEEHIADPSAYGIYILDRRFRSLDDSCSQLTSFLYSFCQQSRRQRIIQRNRTERLSDLLDWKYLGRYYMSARHMALAKAFPDHFTYEPHEVDATQGYRYPRPASVPPSPSLSRHSSPHQSEDEEEPRDGPLGEDSERYDEEEEAAKDRRNIRAPEWPRRASCSSSTGGSKRSNSVDTGPSSSLSTPTEPLSPTSSLGEERN.

Position 8 is a phosphoserine; by AMPK and PKA (serine 8). The residue at position 11 (serine 11) is a Phosphoserine. UDP is bound at residue lysine 39. UDP-alpha-D-glucose-binding residues include histidine 205 and arginine 211. Alpha-D-glucose 6-phosphate is bound by residues histidine 291, glutamate 292, glutamine 294, histidine 297, and lysine 301. Residue arginine 331 coordinates UDP. Position 331 (arginine 331) interacts with UDP-alpha-D-glucose. Residue serine 412 is modified to Phosphoserine. An alpha-D-glucose 6-phosphate-binding site is contributed by histidine 501. The UDP-alpha-D-glucose site is built by glutamate 510, tryptophan 512, and glycine 513. Threonine 515 serves as a coordination point for UDP. Alpha-D-glucose 6-phosphate is bound by residues arginine 582 and arginine 586. Positions glutamine 632–asparagine 738 are disordered. Serine 641 carries the post-translational modification Phosphoserine; by DYRK2, GSK3-alpha, GSK3-beta and PASK. A phosphoserine mark is found at serine 645, serine 649, serine 652, serine 653, serine 657, and serine 672. Residues glutamate 658–alanine 681 show a composition bias toward acidic residues. A compositionally biased stretch (basic and acidic residues) spans alanine 682 to arginine 695. Serine 698, serine 709, and serine 711 each carry phosphoserine. A compositionally biased stretch (low complexity) spans serine 698–asparagine 738. Phosphothreonine is present on residues threonine 722 and threonine 724. A phosphoserine mark is found at serine 728 and serine 732.

Belongs to the glycosyltransferase 3 family. Part of the GYS1-GYG1 complex, a heterooctamer composed of a tetramer of GYS1 and 2 dimers of GYG1, where each GYS1 protomer binds to one GYG1 subunit (via GYG1 C-terminus); the GYS1 tetramer may dissociate from GYG1 dimers to continue glycogen polymerization on its own. Post-translationally, primed phosphorylation at Ser-657 (site 5) by CSNK2A1 and CSNK2A2 is required for inhibitory phosphorylation at Ser-641 (site 3a), Ser-645 (site 3b), Ser-649 (site 3c) and Ser-653 (site 4) by GSK3A an GSK3B. Phosphorylated at Ser-641 by PASK, leading to inactivation; phosphorylation by PASK is inhibited by glycogen. Phosphorylated at Ser-641 by DYRK2, leading to inactivation. Dephosphorylation at Ser-641 and Ser-645 by PP1 activates the enzyme. Phosphorylation at Ser-8 by AMPK inactivates the enzyme activity.

It carries out the reaction [(1-&gt;4)-alpha-D-glucosyl](n) + UDP-alpha-D-glucose = [(1-&gt;4)-alpha-D-glucosyl](n+1) + UDP + H(+). The protein operates within glycan biosynthesis; glycogen biosynthesis. With respect to regulation, allosteric activation by glucose-6-phosphate. Phosphorylation reduces the activity towards UDP-glucose. When in the non-phosphorylated state, glycogen synthase does not require glucose-6-phosphate as an allosteric activator; when phosphorylated it does. Its function is as follows. Glycogen synthase participates in the glycogen biosynthetic process along with glycogenin and glycogen branching enzyme. Extends the primer composed of a few glucose units formed by glycogenin by adding new glucose units to it. In this context, glycogen synthase transfers the glycosyl residue from UDP-Glc to the non-reducing end of alpha-1,4-glucan. The sequence is that of Glycogen [starch] synthase, muscle (Gys1) from Mus musculus (Mouse).